The primary structure comprises 72 residues: UPF0426 protein asl4034 (72 aa).

It belongs to the UPF0426 family.

The polypeptide is UPF0426 protein asl4034 (Nostoc sp. (strain PCC 7120 / SAG 25.82 / UTEX 2576)).